The sequence spans 560 residues: Zorya protein ZorC (560 aa).

In terms of biological role, component of antiviral defense system Zorya type I, composed of ZorA, ZorB, ZorC and ZorD. Expression of Zorya type I in E.coli (strain MG1655) confers 10,000-fold resistance to phage SECphi27, 100-fold resistance to lambda, and 10-fold resistance to T7. While most T7 infected Zorya-containing cells undergo abortive infection, a minority produce viable phage progeny. These eventually accumulate to a high multiplicity of infection, leading to culture collapse by 2 hours after initial infection. ZorA and ZorB probably assemble in the cell inner membrane and exert their effect there. The sequence is that of Zorya protein ZorC from Escherichia coli O139:H28 (strain E24377A / ETEC).